A 118-amino-acid chain; its full sequence is UPF0102 protein ROP_66030 (118 aa).

The protein belongs to the UPF0102 family.

The protein is UPF0102 protein ROP_66030 of Rhodococcus opacus (strain B4).